A 455-amino-acid chain; its full sequence is D-arabinitol 4-dehydrogenase (455 aa).

It belongs to the mannitol dehydrogenase family. As to quaternary structure, monomer.

It catalyses the reaction D-arabinitol + NAD(+) = D-xylulose + NADH + H(+). It participates in carbohydrate metabolism; D-arabinitol metabolism. This Klebsiella pneumoniae protein is D-arabinitol 4-dehydrogenase (dalD).